The primary structure comprises 268 residues: HTH-type transcriptional activator RhaS (268 aa).

Positions 171–268 (RQMIRWLENN…YSIAPRELRI (98 aa)) constitute an HTH araC/xylS-type domain. 2 consecutive DNA-binding regions (H-T-H motif) follow at residues 188 to 209 (EELAEKFALPIRTLHRYIKSQT) and 236 to 259 (IINIAYDCGFNDSSYFSTCFKNEY).

Binds DNA as a dimer.

Its subcellular location is the cytoplasm. Functionally, activates expression of the rhaBAD and rhaT operons. The polypeptide is HTH-type transcriptional activator RhaS (Mannheimia succiniciproducens (strain KCTC 0769BP / MBEL55E)).